Reading from the N-terminus, the 229-residue chain is Potassium/proton antiporter CemA (229 aa).

A run of 3 helical transmembrane segments spans residues 6–26 (AFIP…ISLC), 107–127 (ILHF…SFWG), and 189–209 (ILSG…KYWI).

It belongs to the CemA family.

The protein resides in the plastid. The protein localises to the chloroplast inner membrane. It catalyses the reaction K(+)(in) + H(+)(out) = K(+)(out) + H(+)(in). Contributes to K(+)/H(+) antiport activity by supporting proton efflux to control proton extrusion and homeostasis in chloroplasts in a light-dependent manner to modulate photosynthesis. Prevents excessive induction of non-photochemical quenching (NPQ) under continuous-light conditions. Indirectly promotes efficient inorganic carbon uptake into chloroplasts. In Arabidopsis thaliana (Mouse-ear cress), this protein is Potassium/proton antiporter CemA.